Reading from the N-terminus, the 194-residue chain is Imidazoleglycerol-phosphate dehydratase (194 aa).

Belongs to the imidazoleglycerol-phosphate dehydratase family.

It is found in the cytoplasm. The catalysed reaction is D-erythro-1-(imidazol-4-yl)glycerol 3-phosphate = 3-(imidazol-4-yl)-2-oxopropyl phosphate + H2O. The protein operates within amino-acid biosynthesis; L-histidine biosynthesis; L-histidine from 5-phospho-alpha-D-ribose 1-diphosphate: step 6/9. This Bacillus cereus (strain ZK / E33L) protein is Imidazoleglycerol-phosphate dehydratase.